The sequence spans 493 residues: Probable cytosol aminopeptidase (493 aa).

Mn(2+) is bound by residues lysine 265 and aspartate 270. The active site involves lysine 277. Aspartate 288, aspartate 347, and glutamate 349 together coordinate Mn(2+). Residue arginine 351 is part of the active site.

It belongs to the peptidase M17 family. Requires Mn(2+) as cofactor.

It is found in the cytoplasm. The enzyme catalyses Release of an N-terminal amino acid, Xaa-|-Yaa-, in which Xaa is preferably Leu, but may be other amino acids including Pro although not Arg or Lys, and Yaa may be Pro. Amino acid amides and methyl esters are also readily hydrolyzed, but rates on arylamides are exceedingly low.. It catalyses the reaction Release of an N-terminal amino acid, preferentially leucine, but not glutamic or aspartic acids.. Presumably involved in the processing and regular turnover of intracellular proteins. Catalyzes the removal of unsubstituted N-terminal amino acids from various peptides. This Hydrogenovibrio crunogenus (strain DSM 25203 / XCL-2) (Thiomicrospira crunogena) protein is Probable cytosol aminopeptidase.